Reading from the N-terminus, the 739-residue chain is DEAD-box ATP-dependent RNA helicase 32 (739 aa).

Residues 71–99 (RKFAQLPISDKTKRGLKDAKYVDMTDVQS) carry the Q motif motif. The Helicase ATP-binding domain maps to 102–277 (IPHALCGRDI…RLSLRDPEYI (176 aa)). 115–122 (ARTGSGKT) provides a ligand contact to ATP. The short motif at 225 to 228 (DEAD) is the DEAD box element. Residues 303 to 461 (KLDMLWSFIK…EVSRLLAALL (159 aa)) form the Helicase C-terminal domain. Positions 643-689 (GAEMRKADIEDKKVDKERRREKRMKQKIKRKRGAMEDEEEEEEEDHD) form a coiled coil. The interval 656-725 (VDKERRREKR…GGKINTDSLS (70 aa)) is disordered. The span at 661–674 (RREKRMKQKIKRKR) shows a compositional bias: basic residues. Residues 678–688 (EDEEEEEEEDH) show a composition bias toward acidic residues.

It belongs to the DEAD box helicase family. DDX10/DBP4 subfamily.

It catalyses the reaction ATP + H2O = ADP + phosphate + H(+). This Arabidopsis thaliana (Mouse-ear cress) protein is DEAD-box ATP-dependent RNA helicase 32 (RH32).